Here is a 1036-residue protein sequence, read N- to C-terminus: Lethal(2) giant larvae protein homolog 1 (1036 aa).

WD repeat units follow at residues 38-71 (SALA…FTGL), 78-119 (VTQM…GLSF), 139-175 (VTVV…GQTL), 199-233 (SLQG…DNVF), 239-271 (LESL…GSPP), 289-331 (AINK…ETLV), 339-373 (VIDF…VLDL), 395-473 (TCSA…YKLS), 517-592 (QKVA…RMLI), and 601-662 (TAVT…LRQS). Ser662 carries the phosphoserine modification. Residues 667-677 (RKSRVSGKKRT) show a composition bias toward basic residues. A disordered region spans residues 667–688 (RKSRVSGKKRTPAASSKLQEAN). The span at 679–688 (AASSKLQEAN) shows a compositional bias: polar residues. WD repeat units lie at residues 722-782 (VRCL…KEVQ), 791-843 (AIAV…VSAK), 848-901 (LTAH…VHYS), and 915-938 (VFTR…SLSA). Thr957 is subject to Phosphothreonine. A phosphoserine mark is found at Ser964, Ser982, and Ser989. The interval 980–1002 (PESCEGSPSSAHSKRADTMEPPE) is disordered.

This sequence belongs to the WD repeat L(2)GL family. Associated with nonmuscle myosin II heavy chain. Interacts with PRKCI/aPKC, PARD6B/Par-6 and PARD6A. Interacts with STX4A. Interacts with RAB10 (GDP-bound form); the interaction is direct and promotes RAB10 association with membranes and activation through competition with the Rab inhibitor GDI1. Interacts with DCAF1. Phosphorylated by PRKCI on at least one of the following Ser residues: Ser 654, Ser-658, Ser-662, Ser-669 and Ser-672. Phosphorylation is important for appropriated cell polarization.

The protein resides in the early endosome membrane. It localises to the golgi apparatus. The protein localises to the trans-Golgi network membrane. Its subcellular location is the golgi apparatus membrane. It is found in the cell projection. The protein resides in the axon. It localises to the cytoplasm. The protein localises to the cytoskeleton. Cortical cytoskeleton protein found in a complex involved in maintaining cell polarity and epithelial integrity. Involved in the regulation of mitotic spindle orientation, proliferation, differentiation and tissue organization of neuroepithelial cells. Involved in axonogenesis through RAB10 activation thereby regulating vesicular membrane trafficking toward the axonal plasma membrane. This Mus musculus (Mouse) protein is Lethal(2) giant larvae protein homolog 1 (Llgl1).